The primary structure comprises 551 residues: Dihydroxy-acid dehydratase (551 aa).

Aspartate 78 lines the Mg(2+) pocket. Residue cysteine 119 participates in [2Fe-2S] cluster binding. Mg(2+) contacts are provided by aspartate 120 and lysine 121. N6-carboxylysine is present on lysine 121. A [2Fe-2S] cluster-binding site is contributed by cysteine 191. Glutamate 441 provides a ligand contact to Mg(2+). The active-site Proton acceptor is the serine 467.

It belongs to the IlvD/Edd family. As to quaternary structure, homodimer. [2Fe-2S] cluster serves as cofactor. It depends on Mg(2+) as a cofactor.

It catalyses the reaction (2R)-2,3-dihydroxy-3-methylbutanoate = 3-methyl-2-oxobutanoate + H2O. The enzyme catalyses (2R,3R)-2,3-dihydroxy-3-methylpentanoate = (S)-3-methyl-2-oxopentanoate + H2O. It functions in the pathway amino-acid biosynthesis; L-isoleucine biosynthesis; L-isoleucine from 2-oxobutanoate: step 3/4. The protein operates within amino-acid biosynthesis; L-valine biosynthesis; L-valine from pyruvate: step 3/4. In terms of biological role, functions in the biosynthesis of branched-chain amino acids. Catalyzes the dehydration of (2R,3R)-2,3-dihydroxy-3-methylpentanoate (2,3-dihydroxy-3-methylvalerate) into 2-oxo-3-methylpentanoate (2-oxo-3-methylvalerate) and of (2R)-2,3-dihydroxy-3-methylbutanoate (2,3-dihydroxyisovalerate) into 2-oxo-3-methylbutanoate (2-oxoisovalerate), the penultimate precursor to L-isoleucine and L-valine, respectively. The polypeptide is Dihydroxy-acid dehydratase (Pyrococcus abyssi (strain GE5 / Orsay)).